Here is a 430-residue protein sequence, read N- to C-terminus: Histidine--tRNA ligase (430 aa).

Belongs to the class-II aminoacyl-tRNA synthetase family. In terms of assembly, homodimer.

It is found in the cytoplasm. The catalysed reaction is tRNA(His) + L-histidine + ATP = L-histidyl-tRNA(His) + AMP + diphosphate + H(+). The sequence is that of Histidine--tRNA ligase from Acinetobacter baumannii (strain ACICU).